Reading from the N-terminus, the 553-residue chain is Protein TIC 55, chloroplastic (553 aa).

A chloroplast-targeting transit peptide spans 1-60; it reads MALALASANSFLLPTKTHFALHVSPPPSKKTLLCTNPSSNFSFNKALSSRRRKQAWCVAA. Residues 61-492 lie on the Stromal side of the membrane; sequence AADVKDATLL…GCSSAIKAFQ (432 aa). The region spanning 103-208 is the Rieske domain; it reads WYPLYLTKNV…VRDSQGVLWV (106 aa). Positions 144, 146, 163, and 166 each coordinate [2Fe-2S] cluster. Fe cation-binding residues include H257 and H262. The chain crosses the membrane as a helical span at residues 493–513; it reads IWKNVLSGVVVALAALAILVS. The Chloroplast intermembrane segment spans residues 514–518; that stretch reads GRQWK. A helical membrane pass occupies residues 519 to 539; the sequence is VLLLASASLCSVGVYACSTAI. The Stromal segment spans residues 540–553; it reads AMNTTNFIRVHRRL.

As to quaternary structure, part of the Tic complex. Interacts with TIC62 and TIC110. [2Fe-2S] cluster is required as a cofactor.

The protein resides in the plastid. The protein localises to the chloroplast inner membrane. Functionally, involved in protein precursor import into chloroplasts. Part of the redox regulon consisting of TIC32, TIC 55 and TIC62. This is Protein TIC 55, chloroplastic (TIC55) from Pisum sativum (Garden pea).